A 271-amino-acid chain; its full sequence is Mannosyl-3-phosphoglycerate phosphatase (271 aa).

D13 acts as the Nucleophile in catalysis. Residues D13, D15, and D214 each contribute to the Mg(2+) site.

This sequence belongs to the HAD-like hydrolase superfamily. MPGP family. The cofactor is Mg(2+).

It is found in the cytoplasm. It catalyses the reaction 2-O-(alpha-D-mannosyl)-3-phosphoglycerate + H2O = (2R)-2-O-(alpha-D-mannosyl)-glycerate + phosphate. The polypeptide is Mannosyl-3-phosphoglycerate phosphatase (Escherichia coli O139:H28 (strain E24377A / ETEC)).